We begin with the raw amino-acid sequence, 86 residues long: Late effector protein 1 (86 aa).

Positions 1–24 (MRSHQMAAFFAVSLMMMVVLGALS) are cleaved as a signal peptide.

It belongs to the lep1 family. Interacts at the cell wall with secreted rep1 repellent peptides.

It localises to the secreted. Its subcellular location is the cell wall. Functionally, core effector contributing to spore formation and tumor formation at the host plant. Modulates surface hydrophobicity promoting cell-cell or cell-surface contacts. Lep1 and rep1 interact in aerial hyphae to form a strong hydrophobic layer. Plays a crucial role in hyphal aggregation that might be a prerequisite for strong proliferation of diploid cells and for induction of the morphological changes associated with spore formation. This is Late effector protein 1 from Mycosarcoma maydis (Corn smut fungus).